A 61-amino-acid polypeptide reads, in one-letter code: Small ribosomal subunit protein uS14 (61 aa).

4 residues coordinate Zn(2+): cysteine 24, cysteine 27, cysteine 40, and cysteine 43.

This sequence belongs to the universal ribosomal protein uS14 family. Zinc-binding uS14 subfamily. As to quaternary structure, part of the 30S ribosomal subunit. Contacts proteins S3 and S10. Zn(2+) is required as a cofactor.

Functionally, binds 16S rRNA, required for the assembly of 30S particles and may also be responsible for determining the conformation of the 16S rRNA at the A site. This is Small ribosomal subunit protein uS14 from Caldanaerobacter subterraneus subsp. tengcongensis (strain DSM 15242 / JCM 11007 / NBRC 100824 / MB4) (Thermoanaerobacter tengcongensis).